The following is a 1171-amino-acid chain: ATP-dependent helicase/deoxyribonuclease subunit B (1171 aa).

The UvrD-like helicase ATP-binding domain maps to 1–390 (MSLRFVIGRA…HPLVECIRSA (390 aa)). Residue 8–15 (GRAGSGKS) participates in ATP binding. Positions 281–587 (MEQPRFHSPA…QFANIPPSLD (307 aa)) constitute a UvrD-like helicase C-terminal domain. The [4Fe-4S] cluster site is built by C805, C1129, C1132, and C1138.

This sequence belongs to the helicase family. AddB/RexB type 1 subfamily. Heterodimer of AddA and AddB. It depends on Mg(2+) as a cofactor. [4Fe-4S] cluster serves as cofactor.

Its function is as follows. The heterodimer acts as both an ATP-dependent DNA helicase and an ATP-dependent, dual-direction single-stranded exonuclease. Recognizes the chi site generating a DNA molecule suitable for the initiation of homologous recombination. The AddB subunit has 5' -&gt; 3' nuclease activity but not helicase activity. The sequence is that of ATP-dependent helicase/deoxyribonuclease subunit B from Bacillus cereus (strain B4264).